The following is a 253-amino-acid chain: L-cysteine S-thiosulfotransferase subunit SoxA (253 aa).

Positions M1–A17 are cleaved as a signal peptide. The Cytochrome c domain occupies V44 to S129. Heme c-binding residues include C64, C67, H68, C102, C165, C168, and H169. A substrate-binding site is contributed by R210. A heme c-binding site is contributed by C214. C214 (cysteine persulfide intermediate) is an active-site residue.

It belongs to the SoxA family. As to quaternary structure, heterodimer of SoxA and SoxX. The cofactor is heme c. Cysteine persulfide at Cys-214.

Its subcellular location is the periplasm. It carries out the reaction L-cysteinyl-[SoxY protein] + thiosulfate + 2 Fe(III)-[cytochrome c] = S-sulfosulfanyl-L-cysteinyl-[SoxY protein] + 2 Fe(II)-[cytochrome c] + 2 H(+). The catalysed reaction is S-sulfanyl-L-cysteinyl-[SoxY protein] + thiosulfate + 2 Fe(III)-[cytochrome c] = S-(2-sulfodisulfanyl)-L-cysteinyl-[SoxY protein] + 2 Fe(II)-[cytochrome c] + 2 H(+). In terms of biological role, C-type diheme cytochrome, which is part of the SoxAX cytochrome complex involved in sulfur oxidation. The SoxAX complex catalyzes the formation of a heterodisulfide bond between the conserved cysteine residue on a sulfur carrier SoxYZ complex subunit SoxY and thiosulfate or other inorganic sulfur substrates. This leads to the liberation of two electrons, which may be transferred from the SoxAX complex to another cytochrome c that then channels them into the respiratory electron transport chain. Some electrons may be used for reductive CO(2) fixation. The protein is L-cysteine S-thiosulfotransferase subunit SoxA of Hydrogenobacter thermophilus (strain DSM 6534 / IAM 12695 / TK-6).